A 298-amino-acid polypeptide reads, in one-letter code: Small ribosomal subunit biogenesis GTPase RsgA (298 aa).

One can recognise a CP-type G domain in the interval 67 to 228 (TNELVRPPIS…IADTPGFSSL (162 aa)). GTP is bound by residues 116-119 (TKMD) and 171-179 (GQSGVGKSS). Cysteine 252, cysteine 257, histidine 259, and cysteine 265 together coordinate Zn(2+).

Belongs to the TRAFAC class YlqF/YawG GTPase family. RsgA subfamily. In terms of assembly, monomer. Associates with 30S ribosomal subunit, binds 16S rRNA. Requires Zn(2+) as cofactor.

Its subcellular location is the cytoplasm. One of several proteins that assist in the late maturation steps of the functional core of the 30S ribosomal subunit. Helps release RbfA from mature subunits. May play a role in the assembly of ribosomal proteins into the subunit. Circularly permuted GTPase that catalyzes slow GTP hydrolysis, GTPase activity is stimulated by the 30S ribosomal subunit. The chain is Small ribosomal subunit biogenesis GTPase RsgA from Bacillus pumilus (strain SAFR-032).